A 213-amino-acid chain; its full sequence is MKFLIFVLCLSLVNGYGIRRSIQEYDPKESHEHPTMTWELLEKFVGSTLYITTNQILSLPLGAEIYCDEIEGFPCSWPGYKAYAYNHIDYHFDLSSPFYSFVDKFYISLGDREEKIHLRVVGATPKDKRLTVGCRTSFSVNLPIGTQIYHDKDMQHLVEGRHLECAHRVYFVKYCPSHSHGYCFKDKLKVYDLKRVKSRKCFEKINQQQKSEL.

A signal peptide spans 1–15; sequence MKFLIFVLCLSLVNG.

The chain is Non-structural protein 7b from Canine coronavirus (strain K378) (CCoV).